A 375-amino-acid chain; its full sequence is Actin (375 aa).

It belongs to the actin family.

The protein localises to the cytoplasm. The protein resides in the cytoskeleton. It carries out the reaction ATP + H2O = ADP + phosphate + H(+). Its function is as follows. Actins are highly conserved proteins that are involved in various types of cell motility and are ubiquitously expressed in all eukaryotic cells. This is Actin from Sterkiella cavicola (Ciliate).